Reading from the N-terminus, the 367-residue chain is Molybdopterin synthase catalytic subunit (367 aa).

Substrate is bound by residues 101–102 (HR), K117, and 124–126 (KKE).

The protein belongs to the MoaE family. MOCS2B subfamily. In terms of assembly, heterotetramer; composed of 2 small (Mocs2A) and 2 large (Mocs2B) subunits.

The protein resides in the cytoplasm. The enzyme catalyses 2 [molybdopterin-synthase sulfur-carrier protein]-C-terminal-Gly-aminoethanethioate + cyclic pyranopterin phosphate + H2O = molybdopterin + 2 [molybdopterin-synthase sulfur-carrier protein]-C-terminal Gly-Gly + 2 H(+). It participates in cofactor biosynthesis; molybdopterin biosynthesis. In terms of biological role, catalytic subunit of the molybdopterin synthase complex, a complex that catalyzes the conversion of precursor Z into molybdopterin. Acts by mediating the incorporation of 2 sulfur atoms from thiocarboxylated Mocs2A into precursor Z to generate a dithiolene group. This Drosophila erecta (Fruit fly) protein is Molybdopterin synthase catalytic subunit.